The sequence spans 391 residues: Succinate--CoA ligase [ADP-forming] subunit beta (391 aa).

Residues 9–237 enclose the ATP-grasp domain; that stretch reads RDLFEKHGVP…RATTDPLELR (229 aa). ATP-binding positions include Lys46, 53–55, Ala95, and Glu100; that span reads GRG. The Mg(2+) site is built by Asn192 and Asp206. Residues Asn257 and 320–322 each bind substrate; that span reads GIT.

This sequence belongs to the succinate/malate CoA ligase beta subunit family. In terms of assembly, heterotetramer of two alpha and two beta subunits. Mg(2+) serves as cofactor.

It carries out the reaction succinate + ATP + CoA = succinyl-CoA + ADP + phosphate. The catalysed reaction is GTP + succinate + CoA = succinyl-CoA + GDP + phosphate. Its pathway is carbohydrate metabolism; tricarboxylic acid cycle; succinate from succinyl-CoA (ligase route): step 1/1. In terms of biological role, succinyl-CoA synthetase functions in the citric acid cycle (TCA), coupling the hydrolysis of succinyl-CoA to the synthesis of either ATP or GTP and thus represents the only step of substrate-level phosphorylation in the TCA. The beta subunit provides nucleotide specificity of the enzyme and binds the substrate succinate, while the binding sites for coenzyme A and phosphate are found in the alpha subunit. The polypeptide is Succinate--CoA ligase [ADP-forming] subunit beta (Cutibacterium acnes (strain DSM 16379 / KPA171202) (Propionibacterium acnes)).